Here is a 422-residue protein sequence, read N- to C-terminus: Anhydromevalonate phosphate decarboxylase (422 aa).

Mn(2+) is bound by residues Asn-134 and Glu-197. Asp-244 functions as the Proton acceptor in the catalytic mechanism.

Belongs to the UbiD family. It depends on prenylated FMN as a cofactor. Requires Mn(2+) as cofactor.

It carries out the reaction (2E)-3-methyl-5-phosphooxypent-2-enoate + H(+) = isopentenyl phosphate + CO2. It functions in the pathway isoprenoid biosynthesis; isopentenyl diphosphate biosynthesis via mevalonate pathway. Catalyzes the conversion of trans-anhydromevalonate 5-phosphate (tAHMP) into isopentenyl phosphate. Involved in the archaeal mevalonate (MVA) pathway, which provides fundamental precursors for isoprenoid biosynthesis, such as isopentenyl diphosphate (IPP) and dimethylallyl diphosphate (DMAPP). This is Anhydromevalonate phosphate decarboxylase from Methanosarcina mazei (strain ATCC BAA-159 / DSM 3647 / Goe1 / Go1 / JCM 11833 / OCM 88) (Methanosarcina frisia).